A 792-amino-acid polypeptide reads, in one-letter code: Pentatricopeptide repeat-containing protein At4g30700 (792 aa).

PPR repeat units follow at residues aspartate 51 to proline 81, aspartate 82 to proline 117, asparagine 118 to serine 152, glutamate 153 to lysine 183, aspartate 184 to arginine 218, aspartate 220 to serine 254, histidine 255 to proline 285, aspartate 286 to leucine 320, arginine 321 to serine 352, histidine 353 to lysine 383, serine 384 to proline 418, asparagine 419 to serine 453, serine 454 to lysine 484, asparagine 485 to proline 519, threonine 520 to proline 555, and serine 556 to glutamate 586. Residues valine 591–glycine 666 are type E motif. Residues glutamate 667 to arginine 697 form a type E(+) motif region. The type DYW motif stretch occupies residues glutamate 698–tryptophan 792.

It belongs to the PPR family. PCMP-H subfamily.

The sequence is that of Pentatricopeptide repeat-containing protein At4g30700 (DYW9) from Arabidopsis thaliana (Mouse-ear cress).